The following is a 728-amino-acid chain: Methionine--tRNA ligase (728 aa).

The 'HIGH' region motif lies at Pro13–His23. The Zn(2+) site is built by Cys144, Cys147, Cys157, and Cys160. Residues Lys348–Ser352 carry the 'KMSKS' region motif. ATP is bound at residue Lys351. Positions Leu585–Ser620 are disordered. Residues Asp628–Lys728 form the tRNA-binding domain.

This sequence belongs to the class-I aminoacyl-tRNA synthetase family. MetG type 1 subfamily. As to quaternary structure, homodimer. It depends on Zn(2+) as a cofactor.

It localises to the cytoplasm. The catalysed reaction is tRNA(Met) + L-methionine + ATP = L-methionyl-tRNA(Met) + AMP + diphosphate. In terms of biological role, is required not only for elongation of protein synthesis but also for the initiation of all mRNA translation through initiator tRNA(fMet) aminoacylation. The sequence is that of Methionine--tRNA ligase from Nitrosospira multiformis (strain ATCC 25196 / NCIMB 11849 / C 71).